The primary structure comprises 163 residues: Carbon monoxide dehydrogenase small chain (163 aa).

A 2Fe-2S ferredoxin-type domain is found at 4-80; sequence KIITVNVNGK…GSEVLTVEGL (77 aa). Cys-42, Cys-47, Cys-50, Cys-62, Cys-101, Cys-104, Cys-136, and Cys-138 together coordinate [2Fe-2S] cluster.

In terms of assembly, dimer of heterotrimers. Each heterotrimer consists of a large, a medium and a small subunit. [2Fe-2S] cluster is required as a cofactor.

The enzyme catalyses CO + a quinone + H2O = a quinol + CO2. Functionally, catalyzes the oxidation of carbon monoxide to carbon dioxide. In Hydrogenophaga pseudoflava (Pseudomonas carboxydoflava), this protein is Carbon monoxide dehydrogenase small chain (cutS).